Reading from the N-terminus, the 148-residue chain is Proteasome chaperone 4 (148 aa).

Belongs to the PSMG4 family. In terms of assembly, component of the 20S proteasome chaperone. Forms a heterodimer with IRC25 that binds to proteasome precursors. Interacts with POP2.

The protein resides in the cytoplasm. Functionally, involved in 20S proteasome assembly, facilitating the alpha-ring formation. Involved in maintenance of telomere length. This chain is Proteasome chaperone 4 (POC4), found in Saccharomyces cerevisiae (strain ATCC 204508 / S288c) (Baker's yeast).